The primary structure comprises 286 residues: MIILDGKKVASRRKEELTAKISKYHNKGLRKPKLVVIMVGNDPASEVYVSHKIKVANEVGIYSELLRFDKDIKKEELYNKINELNNDQNIDGILLQLPLPIDFIEEDYLQAITPSKDVDGFHYINQGKMLQGYDTVYPCTPLGIINLLEEYNISVKNKDITLIGTSNIVGKPLGMMLLNNQATITMCNKNTKNIKNHTINADIIISATGKQFIITEDMIKKDAVIIDVGIIRDPVTNKLVGDVDFEKVKLKSSYITPVPGGVGPMTVITLMENTFVLYEKHINKSK.

Residues 164–166 (GTS) and isoleucine 230 each bind NADP(+).

The protein belongs to the tetrahydrofolate dehydrogenase/cyclohydrolase family. Homodimer.

It carries out the reaction (6R)-5,10-methylene-5,6,7,8-tetrahydrofolate + NADP(+) = (6R)-5,10-methenyltetrahydrofolate + NADPH. It catalyses the reaction (6R)-5,10-methenyltetrahydrofolate + H2O = (6R)-10-formyltetrahydrofolate + H(+). Its pathway is one-carbon metabolism; tetrahydrofolate interconversion. In terms of biological role, catalyzes the oxidation of 5,10-methylenetetrahydrofolate to 5,10-methenyltetrahydrofolate and then the hydrolysis of 5,10-methenyltetrahydrofolate to 10-formyltetrahydrofolate. The sequence is that of Bifunctional protein FolD from Mesoplasma florum (strain ATCC 33453 / NBRC 100688 / NCTC 11704 / L1) (Acholeplasma florum).